The chain runs to 919 residues: MTAPWRRLRSLVWEYWAGFLVCAFWIPDSRGMPHVIRIGGIFEYADGPNAQVMNAEEHAFRFSANIINRNRTLLPNTTLTYDIQRIHFHDSFEATKKACDQLALGVVAIFGPSQGSCTNAVQSICNALEVPHIQLRWKHHPLDNKDTFYVNLYPDYASLSHAILDLVQSLKWRSATVVYDDSTGLIRLQELIMAPSRYNIRLKIRQLPIDSDDSRPLLKEMKRGREFRIIFDCSHTMAAQILKQAMAMGMMTEYYHFIFTTLDLYALDLEPYRYSGVNLTGFRILNVDNAHVSAIVEKWSMERLQAAPRAESGLLDGVMMTDAALLYDAVHIVSVCYQRASQMTVNSLQCHRHKPWRFGGRFMNFIKEAQWEGLTGRIVFNKTSGLRTDFDLDIISLKEDGLEKVGVWSPADGLNITEVAKGRGPNVTDSLTNRSLIVTTLLEEPFVMFRKSDRTLYGNDRFEGYCIDLLKELAHILGFSYEIRLVEDGKYGAQDDKGQWNGMVKELIDHKADLAVAPLTITHVREKAIDFSKPFMTLGVSILYRKPNGTNPSVFSFLNPLSPDIWMYVLLAYLGVSCVLFVIARFSPYEWYDAHPCNPGSEVVENNFTLLNSFWFGMGSLMQQGSELMPKALSTRIIGGIWWFFTLIIISSYTANLAAFLTVERMESPIDSADDLAKQTKIEYGAVKDGATMTFFKKSKISTFEKMWAFMSSKPSALVKNNEEGIQRTLTADYALLMESTTIEYITQRNCNLTQIGGLIDSKGYGIGTPMGSPYRDKITIAILQLQEEDKLHIMKEKWWRGSGCPEEENKEASALGIQKIGGIFIVLAAGLVLSVLVAVGEFIYKLRKTAEREQRSFCSTVADEIRFSLTCQRRLKHKPQPPMMVKTDAVINMHTFNDRRLPGKDSMSCSTSLAPVFP.

Positions 1-31 (MTAPWRRLRSLVWEYWAGFLVCAFWIPDSRG) are cleaved as a signal peptide. At 32 to 563 (MPHVIRIGGI…VFSFLNPLSP (532 aa)) the chain is on the extracellular side. 7 N-linked (GlcNAc...) asparagine glycosylation sites follow: Asn-70, Asn-76, Asn-278, Asn-381, Asn-415, Asn-426, and Asn-433. Cys-99 and Cys-350 form a disulfide bridge. L-glutamate-binding residues include Pro-518, Thr-520, and Arg-525. Residues Asn-548 and Asn-551 are each glycosylated (N-linked (GlcNAc...) asparagine). Residues 564 to 584 (DIWMYVLLAYLGVSCVLFVIA) traverse the membrane as a helical segment. At 585–636 (RFSPYEWYDAHPCNPGSEVVENNFTLLNSFWFGMGSLMQQGSELMPKALSTR) the chain is on the cytoplasmic side. A helical membrane pass occupies residues 637 to 657 (IIGGIWWFFTLIIISSYTANL). The Extracellular segment spans residues 658–820 (AAFLTVERME…KEASALGIQK (163 aa)). The L-glutamate site is built by Ala-691, Thr-692, and Glu-739. An N-linked (GlcNAc...) asparagine glycan is attached at Asn-752. A helical transmembrane segment spans residues 821-841 (IGGIFIVLAAGLVLSVLVAVG). Residues 842 to 919 (EFIYKLRKTA…CSTSLAPVFP (78 aa)) are Cytoplasmic-facing. At Ser-869 the chain carries Phosphoserine. A Glycyl lysine isopeptide (Lys-Gly) (interchain with G-Cter in SUMO1) cross-link involves residue Lys-887.

Belongs to the glutamate-gated ion channel (TC 1.A.10.1) family. GRIK3 subfamily. As to quaternary structure, homotetramer, and heterotetramer with GRIK4 or GRIK5. Can form functional heteromeric receptors with GRIK2. Interacts with PRKCABP. Interacts with NETO2. Homomeric GluR7A forms functional kainate receptors which have very low sensitivity to glutamate. Can form functional heteromeric receptors with GRIK4 and GRIK5. In terms of assembly, homomeric GluR7B forms functional kainate receptors. In terms of processing, mass spectrometry data suggest the protein is N-glycosylated at five distinct sites. Expressed in the olfactory bulb (at protein level). Expressed in the deep cortical layers, dentate gyrus, reticular thalamic nucleus, mammillary bodies, pons, and cerebellum of the adult.

Its subcellular location is the cell membrane. It is found in the postsynaptic cell membrane. The catalysed reaction is Ca(2+)(in) = Ca(2+)(out). Its function is as follows. Ionotropic glutamate receptor that functions as a cation-permeable ligand-gated ion channel, gated by L-glutamate and the glutamatergic agonist kainic acid. Binding of the excitatory neurotransmitter L-glutamate induces a conformation change, leading to the opening of the cation channel, and thereby converts the chemical signal to an electrical impulse. The receptor then desensitizes rapidly and enters a transient inactive state, characterized by the presence of bound agonist. In association with GRIK2, involved in presynaptic facilitation of glutamate release at hippocampal mossy fiber synapses. In terms of biological role, ionotropic glutamate receptor that functions as a ligand-gated cation channel, gated by L-glutamate and the glutamatergic agonist kainic acid. This is Glutamate receptor ionotropic, kainate 3 (Grik3) from Rattus norvegicus (Rat).